The chain runs to 470 residues: 3-isopropylmalate dehydratase large subunit (470 aa).

[4Fe-4S] cluster is bound by residues C348, C409, and C412.

Belongs to the aconitase/IPM isomerase family. LeuC type 1 subfamily. In terms of assembly, heterodimer of LeuC and LeuD. [4Fe-4S] cluster serves as cofactor.

The catalysed reaction is (2R,3S)-3-isopropylmalate = (2S)-2-isopropylmalate. The protein operates within amino-acid biosynthesis; L-leucine biosynthesis; L-leucine from 3-methyl-2-oxobutanoate: step 2/4. Its function is as follows. Catalyzes the isomerization between 2-isopropylmalate and 3-isopropylmalate, via the formation of 2-isopropylmaleate. The chain is 3-isopropylmalate dehydratase large subunit from Acidithiobacillus ferrooxidans (strain ATCC 23270 / DSM 14882 / CIP 104768 / NCIMB 8455) (Ferrobacillus ferrooxidans (strain ATCC 23270)).